Reading from the N-terminus, the 369-residue chain is Muscleblind-like protein 1 (369 aa).

4 C3H1-type zinc fingers span residues 13 to 41 (WLTLEVCREFQRGTCSRPDTECKFAHPSK), 47 to 73 (NGRVIACFDSLKGRCSRENCKYLHPPP), 178 to 206 (TDRLEVCREYQRGNCNRGENDCRFAHPAD), and 214 to 240 (DNTVTVCMDYIKGRCSREKCKYFHPPA).

Belongs to the muscleblind family.

It localises to the nucleus. Its subcellular location is the cytoplasm. The protein resides in the cytoplasmic granule. Its function is as follows. Involved in pre-mRNA alternative splicing regulation. Binds to CUG triplet repeat in RNA. The sequence is that of Muscleblind-like protein 1 (MBNL1) from Gallus gallus (Chicken).